The primary structure comprises 281 residues: 4-deoxy-L-threo-5-hexosulose-uronate ketol-isomerase (281 aa).

The Zn(2+) site is built by histidine 198, histidine 200, glutamate 205, and histidine 248.

This sequence belongs to the KduI family. It depends on Zn(2+) as a cofactor.

The catalysed reaction is 5-dehydro-4-deoxy-D-glucuronate = 3-deoxy-D-glycero-2,5-hexodiulosonate. It functions in the pathway glycan metabolism; pectin degradation; 2-dehydro-3-deoxy-D-gluconate from pectin: step 4/5. In terms of biological role, catalyzes the isomerization of 5-dehydro-4-deoxy-D-glucuronate to 3-deoxy-D-glycero-2,5-hexodiulosonate. The polypeptide is 4-deoxy-L-threo-5-hexosulose-uronate ketol-isomerase (Lacticaseibacillus paracasei (strain ATCC 334 / BCRC 17002 / CCUG 31169 / CIP 107868 / KCTC 3260 / NRRL B-441) (Lactobacillus paracasei)).